The primary structure comprises 230 residues: Urease accessory protein UreF (230 aa).

The protein belongs to the UreF family. In terms of assembly, ureD, UreF and UreG form a complex that acts as a GTP-hydrolysis-dependent molecular chaperone, activating the urease apoprotein by helping to assemble the nickel containing metallocenter of UreC. The UreE protein probably delivers the nickel.

Its subcellular location is the cytoplasm. Required for maturation of urease via the functional incorporation of the urease nickel metallocenter. The sequence is that of Urease accessory protein UreF from Marinomonas sp. (strain MWYL1).